An 860-amino-acid chain; its full sequence is Leucine--tRNA ligase (860 aa).

Residues 42–52 (PYPSGRLHMGH) carry the 'HIGH' region motif. Residues 619 to 623 (KMSKS) carry the 'KMSKS' region motif. K622 contributes to the ATP binding site.

It belongs to the class-I aminoacyl-tRNA synthetase family.

The protein resides in the cytoplasm. The enzyme catalyses tRNA(Leu) + L-leucine + ATP = L-leucyl-tRNA(Leu) + AMP + diphosphate. The polypeptide is Leucine--tRNA ligase (Shigella sonnei (strain Ss046)).